The chain runs to 184 residues: Ribosome maturation factor RimM (184 aa).

The 73-residue stretch at 112–184 (TDSYYWIDLI…SNKTISLDWQ (73 aa)) folds into the PRC barrel domain.

Belongs to the RimM family. In terms of assembly, binds ribosomal protein uS19.

It localises to the cytoplasm. An accessory protein needed during the final step in the assembly of 30S ribosomal subunit, possibly for assembly of the head region. Essential for efficient processing of 16S rRNA. May be needed both before and after RbfA during the maturation of 16S rRNA. It has affinity for free ribosomal 30S subunits but not for 70S ribosomes. This Polynucleobacter necessarius subsp. necessarius (strain STIR1) protein is Ribosome maturation factor RimM.